Reading from the N-terminus, the 192-residue chain is UPF0312 protein Pput_4854 (192 aa).

Positions 1–23 (MLKKTFAALALGTALLSAGQAMA) are cleaved as a signal peptide.

The protein belongs to the UPF0312 family. Type 1 subfamily.

Its subcellular location is the periplasm. This chain is UPF0312 protein Pput_4854, found in Pseudomonas putida (strain ATCC 700007 / DSM 6899 / JCM 31910 / BCRC 17059 / LMG 24140 / F1).